Here is a 492-residue protein sequence, read N- to C-terminus: Stage IV sporulation protein A (492 aa).

Positions 24-31 (GAVRTGKS) match the Walker A motif; involved in ATP-binding motif. ATP is bound at residue 24 to 31 (GAVRTGKS).

The protein localises to the cytoplasm. The enzyme catalyses ATP + H2O = ADP + phosphate + H(+). ATPase. Has a role at an early stage in the morphogenesis of the spore coat outer layers. Directs the assembly of the coat and exosporium to an area around the forespore. In Bacillus anthracis, this protein is Stage IV sporulation protein A.